The chain runs to 334 residues: Cytochrome c biogenesis protein CcsA (334 aa).

Helical transmembrane passes span 12-32 (NTAF…VVFP), 35-55 (WLVQ…TALL), 67-87 (ISNL…VHFI), 96-116 (FVGA…ALTL), 141-161 (VMMV…AFLF), 242-262 (IIGL…VWAN), 277-297 (WALI…TKGW), and 303-323 (AILA…VNLL).

The protein belongs to the CcmF/CycK/Ccl1/NrfE/CcsA family. As to quaternary structure, may interact with ccs1.

The protein localises to the cellular thylakoid membrane. In terms of biological role, required during biogenesis of c-type cytochromes (cytochrome c6 and cytochrome f) at the step of heme attachment. This Synechocystis sp. (strain ATCC 27184 / PCC 6803 / Kazusa) protein is Cytochrome c biogenesis protein CcsA.